Consider the following 1323-residue polypeptide: Sister chromatid cohesion protein PDS5 homolog A-A (1323 aa).

The HEAT repeat unit spans residues 385-421; the sequence is FLVNDQLLGFVRERTLDKRWRVRKEAMMGLAQLYKKY. Positions 1139 to 1323 are disordered; it reads LNATGRRPYS…TAQRQIDLHR (185 aa). Positions 1153–1165 are enriched in low complexity; that stretch reads SEISNNVSINSES. 2 stretches are compositionally biased toward polar residues: residues 1166-1176 and 1210-1220; these read DASVANRQSSE and LDQTAPSNTGT. Positions 1235–1246 are enriched in basic and acidic residues; it reads NIRKESEEKKAD.

As to quaternary structure, interacts with the cohesin complex. Binds chromatin in a cohesin-dependent manner.

It localises to the nucleus. Its function is as follows. May regulate sister chromatid cohesion during mitosis and couple it to DNA replication. The protein is Sister chromatid cohesion protein PDS5 homolog A-A (pds5a-a) of Xenopus laevis (African clawed frog).